A 274-amino-acid polypeptide reads, in one-letter code: MDRYCVFGNPIGHSKSPLIHRLFAEQTGQALAYEAQLAPLDDFAGFARRFFEQGKGANVTVPFKEEAYRLVDELSERATRAGAVNTLVRLDGGRLRGDNTDGAGLLRDLTVNAGVQLRDRRVLLLGAGGAVRGVLAPFLGERPAQLLVANRTAEKAVALAGEFADLGAVRGCGFADVEGPFDLIVNGTSASLAGDVPPLAESVIERGRTVCYDMMYAKEATAFNRWAAERGAARTLDGLGMLVEQAAEAFFLWRGVRPASAPVLETLRRQLATG.

Residues 14–16 and T60 contribute to the shikimate site; that span reads SKS. Residue K64 is the Proton acceptor of the active site. Position 76 (E76) interacts with NADP(+). N85 and D101 together coordinate shikimate. Residues 126–130, 150–155, and M214 contribute to the NADP(+) site; these read GAGGA and NRTAEK. Shikimate is bound at residue Y216. Residue G238 participates in NADP(+) binding.

This sequence belongs to the shikimate dehydrogenase family. Homodimer.

The enzyme catalyses shikimate + NADP(+) = 3-dehydroshikimate + NADPH + H(+). Its pathway is metabolic intermediate biosynthesis; chorismate biosynthesis; chorismate from D-erythrose 4-phosphate and phosphoenolpyruvate: step 4/7. Functionally, involved in the biosynthesis of the chorismate, which leads to the biosynthesis of aromatic amino acids. Catalyzes the reversible NADPH linked reduction of 3-dehydroshikimate (DHSA) to yield shikimate (SA). This is Shikimate dehydrogenase (NADP(+)) from Pseudomonas paraeruginosa (strain DSM 24068 / PA7) (Pseudomonas aeruginosa (strain PA7)).